A 348-amino-acid chain; its full sequence is Methylthioribose-1-phosphate isomerase (348 aa).

Residues 47-49 (RGA), Arg-90, and Gln-196 contribute to the substrate site. Catalysis depends on Asp-237, which acts as the Proton donor. 247 to 248 (NK) serves as a coordination point for substrate.

It belongs to the eIF-2B alpha/beta/delta subunits family. MtnA subfamily.

It carries out the reaction 5-(methylsulfanyl)-alpha-D-ribose 1-phosphate = 5-(methylsulfanyl)-D-ribulose 1-phosphate. Its pathway is amino-acid biosynthesis; L-methionine biosynthesis via salvage pathway; L-methionine from S-methyl-5-thio-alpha-D-ribose 1-phosphate: step 1/6. Functionally, catalyzes the interconversion of methylthioribose-1-phosphate (MTR-1-P) into methylthioribulose-1-phosphate (MTRu-1-P). The protein is Methylthioribose-1-phosphate isomerase of Synechococcus sp. (strain ATCC 27144 / PCC 6301 / SAUG 1402/1) (Anacystis nidulans).